We begin with the raw amino-acid sequence, 163 residues long: Protein-export protein SecB (163 aa).

It belongs to the SecB family. Homotetramer, a dimer of dimers. One homotetramer interacts with 1 SecA dimer.

It is found in the cytoplasm. One of the proteins required for the normal export of preproteins out of the cell cytoplasm. It is a molecular chaperone that binds to a subset of precursor proteins, maintaining them in a translocation-competent state. It also specifically binds to its receptor SecA. The chain is Protein-export protein SecB from Burkholderia cenocepacia (strain ATCC BAA-245 / DSM 16553 / LMG 16656 / NCTC 13227 / J2315 / CF5610) (Burkholderia cepacia (strain J2315)).